The sequence spans 200 residues: WUSCHEL-related homeobox 9 (200 aa).

The homeobox; WUS-type DNA-binding region spans 10–74; it reads VKCGRWNPTA…NHKARERHHH (65 aa). Residues 70-80 are compositionally biased toward basic residues; the sequence is ERHHHKKRRRG. The segment at 70–118 is disordered; sequence ERHHHKKRRRGASSPDSGSNDDDGRAAAHEGDADLVLQPPESKREARSY. Residues 91–101 show a composition bias toward basic and acidic residues; that stretch reads DDGRAAAHEGD.

This sequence belongs to the WUS homeobox family. Specifically expressed in the central cells of the quiescent center (QC) of the root.

The protein resides in the nucleus. Functionally, transcription factor which may be involved in the specification and maintenance of the stem cells (QC cells) in the root apical meristem (RAM). The chain is WUSCHEL-related homeobox 9 (WOX9) from Oryza sativa subsp. japonica (Rice).